Reading from the N-terminus, the 369-residue chain is Sulfate permease 2, chloroplastic (369 aa).

The tract at residues Met-1–Ser-21 is disordered. Residues Met-1–Ser-82 constitute a chloroplast transit peptide. The next 5 membrane-spanning stretches (helical) occupy residues Val-110–Val-130, Thr-156–Ile-176, Val-187–Met-207, Val-229–Val-249, and Thr-335–Ile-355. An ABC transmembrane type-1 domain is found at Leu-153–Lys-356.

The protein belongs to the ATP-binding cassette (ABC) (TC 3.A.1) superfamily. In terms of assembly, part of the chloroplast sulfate permease holocomplex. May form a heterodimer with SLUP1.

It is found in the plastid. The protein resides in the chloroplast membrane. Its function is as follows. Part of the ABC-type chloroplast envelope-localized sulfate transporter. The sequence is that of Sulfate permease 2, chloroplastic (SULP2) from Chlamydomonas reinhardtii (Chlamydomonas smithii).